The chain runs to 442 residues: 5-methylthioadenosine/S-adenosylhomocysteine deaminase (442 aa).

Residues His72 and His74 each coordinate Zn(2+). The substrate site is built by Glu101 and His194. His221 contacts Zn(2+). Positions 224 and 309 each coordinate substrate. Asp309 serves as a coordination point for Zn(2+).

This sequence belongs to the metallo-dependent hydrolases superfamily. MTA/SAH deaminase family. Requires Zn(2+) as cofactor.

It carries out the reaction S-adenosyl-L-homocysteine + H2O + H(+) = S-inosyl-L-homocysteine + NH4(+). The catalysed reaction is S-methyl-5'-thioadenosine + H2O + H(+) = S-methyl-5'-thioinosine + NH4(+). In terms of biological role, catalyzes the deamination of 5-methylthioadenosine and S-adenosyl-L-homocysteine into 5-methylthioinosine and S-inosyl-L-homocysteine, respectively. Is also able to deaminate adenosine. The protein is 5-methylthioadenosine/S-adenosylhomocysteine deaminase of Teredinibacter turnerae (strain ATCC 39867 / T7901).